The sequence spans 396 residues: S-adenosylmethionine synthase 3 (396 aa).

Glu-13 is a Mg(2+) binding site. Residue His-19 coordinates ATP. Glu-47 serves as a coordination point for K(+). Glu-60 and Gln-103 together coordinate L-methionine. ATP contacts are provided by residues Asp-171–Lys-173, Ser-239–Phe-242, Asp-250, Arg-256–Lys-257, Ala-273, Lys-277, and Lys-281. Asp-250 is a binding site for L-methionine. Lys-281 contributes to the L-methionine binding site.

It belongs to the AdoMet synthase family. In terms of assembly, homotetramer. The cofactor is Mn(2+). It depends on Mg(2+) as a cofactor. Requires Co(2+) as cofactor. K(+) is required as a cofactor. In terms of tissue distribution, expressed in roots, stems and leaves (at protein level).

The protein resides in the cytoplasm. The enzyme catalyses L-methionine + ATP + H2O = S-adenosyl-L-methionine + phosphate + diphosphate. It participates in amino-acid biosynthesis; S-adenosyl-L-methionine biosynthesis; S-adenosyl-L-methionine from L-methionine: step 1/1. Functionally, catalyzes the formation of S-adenosylmethionine from methionine and ATP. The reaction comprises two steps that are both catalyzed by the same enzyme: formation of S-adenosylmethionine (AdoMet) and triphosphate, and subsequent hydrolysis of the triphosphate. May be involved in the synthesis of betain in response to abiotic stress such as high salinity. This is S-adenosylmethionine synthase 3 (SAMS3) from Atriplex nummularia (Old man saltbush).